The primary structure comprises 259 residues: Probable ABC transporter permease protein RF_0080 (259 aa).

Transmembrane regions (helical) follow at residues 13-35, 49-69, 148-168, 195-215, and 237-257; these read TIKFAQSVGSFSLFSFAAVSSII, LFIGFHSLPVVAMTTFFSGAV, VIAAIITMPCLVLIGDIIGVM, PIDVISGLVKAGVFGFIISII, and AVVNSSILILISNYLITELFF.

It belongs to the MlaE permease family.

Its subcellular location is the cell inner membrane. Functionally, could be part of an ABC transporter complex. In Rickettsia felis (strain ATCC VR-1525 / URRWXCal2) (Rickettsia azadi), this protein is Probable ABC transporter permease protein RF_0080.